The following is a 580-amino-acid chain: Arginine--tRNA ligase (580 aa).

The 'HIGH' region motif lies at 131–141 (ANPTGPMHVGH).

This sequence belongs to the class-I aminoacyl-tRNA synthetase family. Monomer.

It localises to the cytoplasm. It carries out the reaction tRNA(Arg) + L-arginine + ATP = L-arginyl-tRNA(Arg) + AMP + diphosphate. This Cereibacter sphaeroides (strain ATCC 17025 / ATH 2.4.3) (Rhodobacter sphaeroides) protein is Arginine--tRNA ligase.